The following is a 227-amino-acid chain: Ribose-5-phosphate isomerase A (227 aa).

Residues 26 to 29, 82 to 85, and 95 to 98 contribute to the substrate site; these read TGST, DGAD, and KGGG. E104 functions as the Proton acceptor in the catalytic mechanism. Residue K122 coordinates substrate.

This sequence belongs to the ribose 5-phosphate isomerase family. As to quaternary structure, homodimer.

The enzyme catalyses aldehydo-D-ribose 5-phosphate = D-ribulose 5-phosphate. The protein operates within carbohydrate degradation; pentose phosphate pathway; D-ribose 5-phosphate from D-ribulose 5-phosphate (non-oxidative stage): step 1/1. Its function is as follows. Catalyzes the reversible conversion of ribose-5-phosphate to ribulose 5-phosphate. The chain is Ribose-5-phosphate isomerase A from Streptococcus pneumoniae (strain Hungary19A-6).